Here is a 99-residue protein sequence, read N- to C-terminus: Ubiquitin-related modifier 1 (99 aa).

Glycine 99 bears the 1-thioglycine mark. A Glycyl lysine isopeptide (Gly-Lys) (interchain with K-? in acceptor proteins) cross-link involves residue glycine 99.

It belongs to the URM1 family. C-terminal thiocarboxylation occurs in 2 steps, it is first acyl-adenylated (-COAMP) via the hesA/moeB/thiF part of UBA4, then thiocarboxylated (-COSH) via the rhodanese domain of UBA4.

It localises to the cytoplasm. It functions in the pathway tRNA modification; 5-methoxycarbonylmethyl-2-thiouridine-tRNA biosynthesis. Functionally, acts as a sulfur carrier required for 2-thiolation of mcm(5)S(2)U at tRNA wobble positions of cytosolic tRNA(Lys), tRNA(Glu) and tRNA(Gln). Serves as sulfur donor in tRNA 2-thiolation reaction by being thiocarboxylated (-COSH) at its C-terminus by the MOCS3 homolog UBA4. The sulfur is then transferred to tRNA to form 2-thiolation of mcm(5)S(2)U. Prior mcm(5) tRNA modification by the elongator complex is required for 2-thiolation. Also acts as a ubiquitin-like protein (UBL) that is covalently conjugated via an isopeptide bond to lysine residues of target proteins such as AHP1. The thiocarboxylated form serves as substrate for conjugation and oxidative stress specifically induces the formation of UBL-protein conjugates. The sequence is that of Ubiquitin-related modifier 1 from Yarrowia lipolytica (strain CLIB 122 / E 150) (Yeast).